The chain runs to 271 residues: 5-deoxy-glucuronate isomerase (271 aa).

This sequence belongs to the isomerase IolB family.

It catalyses the reaction 5-deoxy-D-glucuronate = 5-dehydro-2-deoxy-D-gluconate. The protein operates within polyol metabolism; myo-inositol degradation into acetyl-CoA; acetyl-CoA from myo-inositol: step 4/7. Its function is as follows. Involved in the isomerization of 5-deoxy-glucuronate (5DG) to 5-dehydro-2-deoxy-D-gluconate (DKG or 2-deoxy-5-keto-D-gluconate). This is 5-deoxy-glucuronate isomerase from Shouchella clausii (strain KSM-K16) (Alkalihalobacillus clausii).